Here is a 220-residue protein sequence, read N- to C-terminus: Redox-sensing transcriptional repressor Rex (220 aa).

A DNA-binding region (H-T-H motif) is located at residues 25–64 (WYLSNVKLLKQKGERYVSSTQISKEINIDASQIAKDLSYV). 99–104 (GVGSLG) is a binding site for NAD(+).

This sequence belongs to the transcriptional regulatory Rex family. Homodimer.

It localises to the cytoplasm. In terms of biological role, modulates transcription in response to changes in cellular NADH/NAD(+) redox state. This is Redox-sensing transcriptional repressor Rex from Bacteroides fragilis (strain ATCC 25285 / DSM 2151 / CCUG 4856 / JCM 11019 / LMG 10263 / NCTC 9343 / Onslow / VPI 2553 / EN-2).